A 615-amino-acid polypeptide reads, in one-letter code: Elongation factor 4 (615 aa).

The region spanning 14–200 (ARIRNFCIIA…KVVELIPAPT (187 aa)) is the tr-type G domain. Residues 26–31 (DHGKST) and 147–150 (NKID) contribute to the GTP site.

It belongs to the TRAFAC class translation factor GTPase superfamily. Classic translation factor GTPase family. LepA subfamily.

It localises to the cell membrane. The catalysed reaction is GTP + H2O = GDP + phosphate + H(+). Functionally, required for accurate and efficient protein synthesis under certain stress conditions. May act as a fidelity factor of the translation reaction, by catalyzing a one-codon backward translocation of tRNAs on improperly translocated ribosomes. Back-translocation proceeds from a post-translocation (POST) complex to a pre-translocation (PRE) complex, thus giving elongation factor G a second chance to translocate the tRNAs correctly. Binds to ribosomes in a GTP-dependent manner. The protein is Elongation factor 4 of Corynebacterium glutamicum (strain ATCC 13032 / DSM 20300 / JCM 1318 / BCRC 11384 / CCUG 27702 / LMG 3730 / NBRC 12168 / NCIMB 10025 / NRRL B-2784 / 534).